The chain runs to 640 residues: MFSCTKAYEYQNYSALKRACLRRKVLFEDPHFPASDDSLYYKGTPGPTVRWKRPFDICDDPRLFVDGISSHDLHQGQVGNCWFVAACSSLASRESLWQKVIPDWKEQEWNPEKPDSYAGIFHFNFWRFGEWVDVVVDDRLPTVNNQLIYCHSNSKNEFWCAPVEKAYAKLAGCYQALDGGNTADALVDFTGGVSEPIDLTEGDLATDEAKRSQLFERVLKVHSRGGLISASIKAMTAADMETRLACGLVKGHAYAVTDVRKVRLGHGLLAFFKSEKLDMIRLRNPWGERVWTGPWSDTSEEWQKVSKSEREKMGVTVQDDGEFWMTYEDMCRYFTDIIKCRLINTSYLSIHKTWEEARLRGAWTRHEDPQQNRSGGCINHKDTFFQNPQYIFEVKKPEDEVLICIQQRPKRSTRREGKGENLAIGFDIYKVEENRQYRMHSLQHKAASSIYINSRSVFLRTELPEGRYVIIPTTFEPGHTGELLLRVFTDVPSNCRELRLDEPPRTCWSSLCGYPQQVTQVHVLGAAGLKDSSTGANSYVIIKCEGEKVRSAVQRGTSTPEYNVKGIFYRKKLSQPITVQVWNNRVLKDEFLGQVHLKTAPDDLQDLHSLHLQDRSGRQPSDLPGIVAVRVLCSASLTAV.

The Calpain catalytic domain maps to 26 to 343 (LFEDPHFPAS…FTDIIKCRLI (318 aa)). Catalysis depends on residues cysteine 81, histidine 252, and asparagine 284. The interval 344-496 (NTSYLSIHKT…VFTDVPSNCR (153 aa)) is domain III. A C2 domain is found at 499–617 (RLDEPPRTCW…HSLHLQDRSG (119 aa)).

It belongs to the peptidase C2 family.

In terms of biological role, calcium-regulated non-lysosomal thiol-protease. The protein is Calpain-5 (Capn5) of Rattus norvegicus (Rat).